Consider the following 258-residue polypeptide: ATP synthase subunit a (258 aa).

6 consecutive transmembrane segments (helical) span residues 30-50 (SSYF…VAMS), 85-105 (FFPF…LGMF), 122-142 (LIVT…YGVF), 151-171 (LFVP…IEII), 198-218 (FAGF…LAGI), and 230-250 (LEFL…CIYL).

This sequence belongs to the ATPase A chain family. As to quaternary structure, F-type ATPases have 2 components, CF(1) - the catalytic core - and CF(0) - the membrane proton channel. CF(1) has five subunits: alpha(3), beta(3), gamma(1), delta(1), epsilon(1). CF(0) has three main subunits: a(1), b(2) and c(9-12). The alpha and beta chains form an alternating ring which encloses part of the gamma chain. CF(1) is attached to CF(0) by a central stalk formed by the gamma and epsilon chains, while a peripheral stalk is formed by the delta and b chains.

The protein localises to the cell inner membrane. In terms of biological role, key component of the proton channel; it plays a direct role in the translocation of protons across the membrane. The polypeptide is ATP synthase subunit a (Maricaulis maris (strain MCS10) (Caulobacter maris)).